Here is a 550-residue protein sequence, read N- to C-terminus: Chaperonin GroEL (550 aa).

ATP-binding positions include 30–33 (TLGP), K51, 87–91 (DGTTT), G415, and D497.

Belongs to the chaperonin (HSP60) family. In terms of assembly, forms a cylinder of 14 subunits composed of two heptameric rings stacked back-to-back. Interacts with the co-chaperonin GroES.

It localises to the cytoplasm. It carries out the reaction ATP + H2O + a folded polypeptide = ADP + phosphate + an unfolded polypeptide.. Functionally, together with its co-chaperonin GroES, plays an essential role in assisting protein folding. The GroEL-GroES system forms a nano-cage that allows encapsulation of the non-native substrate proteins and provides a physical environment optimized to promote and accelerate protein folding. The polypeptide is Chaperonin GroEL (Yersinia enterocolitica).